We begin with the raw amino-acid sequence, 646 residues long: Hexon protein p72 (646 aa).

The protein belongs to the NCLDV major capsid protein family. Homotrimer. The membrane-bound form, but not the cytosolic one, assembles into large complexes. Interacts with the minor capsid proteins M1249L and p17; these interactions form a rigid zipper structure that stabilizes the capsomers.

It is found in the virion. Its subcellular location is the host endoplasmic reticulum membrane. The protein localises to the host cytoplasm. It localises to the host cytosol. Functionally, capsid protein that self-assembles to form the pseudo-hexameric capsomers of the icosahedral capsid. The capsid is constructed of 2760 pseudo-hexameric capsomers and 12 pentameric capsomers, with a T=277 symmetry, about 200 nm in diameter. The capsid encapsulates the DNA-containing nucleoid, the core shell and the inner membrane. Plays an essential role in virion assembly. Involved in virus attachment to the host cell. In Ornithodoros (relapsing fever ticks), this protein is Hexon protein p72.